Reading from the N-terminus, the 1017-residue chain is A-type ATP synthase subunit A (1017 aa).

The DOD-type homing endonuclease domain maps to 396–529 (FLGYLIADGT…FSYLLAKLGI (134 aa)).

Belongs to the ATPase alpha/beta chains family. As to quaternary structure, has multiple subunits with at least A(3), B(3), C, D, E, F, H, I and proteolipid K(x). This protein undergoes a protein self splicing that involves a post-translational excision of the VDE intervening region (intein) followed by peptide ligation.

The protein localises to the cell membrane. The catalysed reaction is ATP + H2O + 4 H(+)(in) = ADP + phosphate + 5 H(+)(out). In terms of biological role, component of the A-type ATP synthase that produces ATP from ADP in the presence of a proton gradient across the membrane. The A chain is the catalytic subunit. The sequence is that of A-type ATP synthase subunit A from Pyrococcus abyssi (strain GE5 / Orsay).